The sequence spans 70 residues: DNA-directed RNA polymerase subunit omega (70 aa).

Belongs to the RNA polymerase subunit omega family. The RNAP catalytic core consists of 2 alpha, 1 beta, 1 beta' and 1 omega subunit. When a sigma factor is associated with the core the holoenzyme is formed, which can initiate transcription.

The catalysed reaction is RNA(n) + a ribonucleoside 5'-triphosphate = RNA(n+1) + diphosphate. Its function is as follows. Promotes RNA polymerase assembly. Latches the N- and C-terminal regions of the beta' subunit thereby facilitating its interaction with the beta and alpha subunits. The protein is DNA-directed RNA polymerase subunit omega of Bacillus mycoides (strain KBAB4) (Bacillus weihenstephanensis).